A 101-amino-acid polypeptide reads, in one-letter code: Small ribosomal subunit protein uS14 (101 aa).

This sequence belongs to the universal ribosomal protein uS14 family. In terms of assembly, part of the 30S ribosomal subunit. Contacts proteins S3 and S10.

Functionally, binds 16S rRNA, required for the assembly of 30S particles and may also be responsible for determining the conformation of the 16S rRNA at the A site. This is Small ribosomal subunit protein uS14 from Synechococcus sp. (strain JA-2-3B'a(2-13)) (Cyanobacteria bacterium Yellowstone B-Prime).